A 330-amino-acid polypeptide reads, in one-letter code: Aspartate--ammonia ligase (330 aa).

This sequence belongs to the class-II aminoacyl-tRNA synthetase family. AsnA subfamily.

Its subcellular location is the cytoplasm. It carries out the reaction L-aspartate + NH4(+) + ATP = L-asparagine + AMP + diphosphate + H(+). Its pathway is amino-acid biosynthesis; L-asparagine biosynthesis; L-asparagine from L-aspartate (ammonia route): step 1/1. This is Aspartate--ammonia ligase from Streptococcus equi subsp. zooepidemicus (strain H70).